The following is a 106-amino-acid chain: YcgL domain-containing protein PsycPRwf_1721 (106 aa).

One can recognise a YcgL domain in the interval 1–94 (MHCDIYKFPK…PSDVLLAQAQ (94 aa)).

The polypeptide is YcgL domain-containing protein PsycPRwf_1721 (Psychrobacter sp. (strain PRwf-1)).